The primary structure comprises 322 residues: Protein prune homolog 2 (322 aa).

Residues 1–110 (MDIHFEEGVL…SIPEYTAEEE (110 aa)) are disordered. Over residues 40 to 52 (PNINLSLDQSEGS) the composition is skewed to polar residues. Over residues 57 to 80 (DNLDSPDEIDINVDELDTPDEADS) the composition is skewed to acidic residues. Residues 130-291 (DMKVIEPYRR…SIIKYDEEKS (162 aa)) enclose the CRAL-TRIO domain.

The protein resides in the cytoplasm. Its function is as follows. May play an important role in regulating differentiation, survival and aggressiveness of the tumor cells. This is Protein prune homolog 2 (Prune2) from Rattus norvegicus (Rat).